The following is a 1456-amino-acid chain: Sterol 3-beta-glucosyltransferase (1456 aa).

Over residues 60-70 (ESDEEDGDEVE) the composition is skewed to acidic residues. 2 disordered regions span residues 60-113 (ESDE…SISH) and 128-156 (LSPH…TQSE). Residues 71–104 (TPSTTTTAVSPSATMSAPSPTATAPTPHSGTHTP) show a composition bias toward low complexity. A compositionally biased stretch (basic and acidic residues) spans 137 to 146 (SSHEASRRGS). In terms of domain architecture, GRAM 1 spans 200–247 (QKLKGFAALDVDEQLIADYPVWLLKNVLIQGHLYITAKHMCFLSYLPR). In terms of domain architecture, PH spans 251–351 (ANIRSGTLVK…WVKALQKEIF (101 aa)). Disordered stretches follow at residues 462-512 (HSAH…PRLP) and 524-776 (DKCD…QDTF). Positions 496–508 (QPHERDEKRDSKL) are enriched in basic and acidic residues. The segment covering 556-567 (LASQRTSSSTLF) has biased composition (polar residues). 2 stretches are compositionally biased toward low complexity: residues 576 to 606 (SQPT…PASA) and 647 to 676 (GGAT…SSPG). A compositionally biased stretch (gly residues) spans 677–696 (TPGGLGGPGAVGAGGPGVMG). Positions 719 to 735 (APHDPAAAAAAADAAAP) are enriched in low complexity. The GRAM 2 domain occupies 827–893 (ERFQKRFALG…KVVENATKDS (67 aa)). UDP-alpha-D-glucose-binding residues include serine 1004, arginine 1005, aspartate 1007, asparagine 1279, asparagine 1307, histidine 1310, histidine 1323, serine 1326, glycine 1327, threonine 1328, aspartate 1347, and glutamine 1348.

This sequence belongs to the glycosyltransferase 28 family.

It is found in the cytoplasm. The protein resides in the membrane. The catalysed reaction is a sterol + UDP-alpha-D-glucose = a sterol 3-beta-D-glucoside + UDP + H(+). It catalyses the reaction ergosterol + UDP-alpha-D-glucose = ergosteryl 3-beta-D-glucoside + UDP + H(+). Sterol glycosyltransferase responsible for the glycosylation of ergosterol to form ergosterol-glucoside. This Yarrowia lipolytica (strain CLIB 122 / E 150) (Yeast) protein is Sterol 3-beta-glucosyltransferase.